Here is a 39-residue protein sequence, read N- to C-terminus: Cygnin (39 aa).

A Pyrrolidone carboxylic acid modification is found at glutamine 1. Disulfide bonds link cysteine 6–cysteine 33, cysteine 12–cysteine 28, and cysteine 16–cysteine 32.

It belongs to the transferrin family.

In Cygnus atratus (Black swan), this protein is Cygnin.